A 630-amino-acid polypeptide reads, in one-letter code: YTH domain-containing family protein 1 (630 aa).

Disordered stretches follow at residues 38–113 (DMTQ…YMQQ), 160–183 (YYPQ…AGPY), and 200–241 (QVGD…QSGH). Residues 70–102 (PGQQQQHQYGSPPNTNGNAQPMPQAHGNNTMNS) show a composition bias toward polar residues. Positions 382-590 (EKYFILKSLT…SVGRKLTGLF (209 aa)) constitute a YTH domain.

It belongs to the YTHDF family. YTHDF1 subfamily.

It localises to the cytoplasm. It is found in the P-body. Functionally, specifically recognizes and binds N6-methyladenosine (m6A)-containing mRNAs, and regulates their stability. M6A is a modification present at internal sites of mRNAs and some non-coding RNAs and plays a role in mRNA stability and processing. Plays a role in pathogenicity towards plant host. This chain is YTH domain-containing family protein 1, found in Pyricularia oryzae (strain 70-15 / ATCC MYA-4617 / FGSC 8958) (Rice blast fungus).